The sequence spans 492 residues: Virion host shutoff protein (492 aa).

Disordered stretches follow at residues 110-130 (EEAS…SRPS), 288-307 (SQAR…LESM), and 334-371 (EDDY…ELVQ).

The protein belongs to the herpesviridae VHS protein family. Interacts with human EIF4H, EIF4A1 and EIF4A2; interaction with eIF4AI and EIF4A2 presumably allows Vhs protein to associate with the eIF4F cap-binding complex.

It is found in the virion. In terms of biological role, minor structural protein that acts as an endoribonuclease during lytic infection. Degrades host mRNAs in the cytoplasm by cutting them at preferred sites, including some in regions of translation initiation. Together with inhibition of host splicing by ICP27, contributes to an overall decrease in host protein synthesis. Also, after the onset of viral transcription, accelerates the turnover of viral mRNA, thereby facilitating the sequential expression of different classes of viral genes. Binds translation initiation factors eIF4H, eIF4AI, and eIF4AII, thereby may interact directly with the translation initiation complex and thus digest specifically mRNAs. Also impedes antigen presentation by major histocompatibility complex class I and class II molecules, inhibits secretion of cytokines that would otherwise recruit lymphocytes and neutrophils cells to the site of infection and blocks the activation of dendritic cells. Impedes the alpha/beta interferon-mediated response to infection. Inhibits the integrated stress response (ISR) in the infected cell, this function requires the endonuclease activity. Stress granule formation is thus inhibited, which allows protein synthesis and viral replication. This Homo sapiens (Human) protein is Virion host shutoff protein (UL41).